We begin with the raw amino-acid sequence, 299 residues long: Aspartate carbamoyltransferase catalytic subunit (299 aa).

2 residues coordinate carbamoyl phosphate: arginine 51 and threonine 52. Lysine 79 contributes to the L-aspartate binding site. Carbamoyl phosphate-binding residues include arginine 101, histidine 130, and glutamine 133. Positions 163 and 215 each coordinate L-aspartate. Carbamoyl phosphate contacts are provided by glycine 256 and proline 257.

Belongs to the aspartate/ornithine carbamoyltransferase superfamily. ATCase family. Heterododecamer (2C3:3R2) of six catalytic PyrB chains organized as two trimers (C3), and six regulatory PyrI chains organized as three dimers (R2).

It carries out the reaction carbamoyl phosphate + L-aspartate = N-carbamoyl-L-aspartate + phosphate + H(+). The protein operates within pyrimidine metabolism; UMP biosynthesis via de novo pathway; (S)-dihydroorotate from bicarbonate: step 2/3. Its function is as follows. Catalyzes the condensation of carbamoyl phosphate and aspartate to form carbamoyl aspartate and inorganic phosphate, the committed step in the de novo pyrimidine nucleotide biosynthesis pathway. The sequence is that of Aspartate carbamoyltransferase catalytic subunit from Ehrlichia chaffeensis (strain ATCC CRL-10679 / Arkansas).